The chain runs to 374 residues: Phosphatidylglycerol--prolipoprotein diacylglyceryl transferase (374 aa).

A run of 4 helical transmembrane segments spans residues 33–53, 155–175, 195–215, and 222–242; these read ICFITGFILGYFIIVPIIALF, LCWFIVFGTLIGARLGAVFFY, LASHGGALGVMLALFFYTSYI, and LSFLRVLDFVAIPSALTAVFI. R243 provides a ligand contact to a 1,2-diacyl-sn-glycero-3-phospho-(1'-sn-glycerol). Helical transmembrane passes span 279-299, 306-326, and 341-361; these read PVQLYEAFAYLMTFFLLFTLW, LAAGTYAGFLFIFNFSSRFLL, and ILQMGQLLSIPFILFGICLVW.

This sequence belongs to the Lgt family.

The protein resides in the cell inner membrane. The catalysed reaction is L-cysteinyl-[prolipoprotein] + a 1,2-diacyl-sn-glycero-3-phospho-(1'-sn-glycerol) = an S-1,2-diacyl-sn-glyceryl-L-cysteinyl-[prolipoprotein] + sn-glycerol 1-phosphate + H(+). It participates in protein modification; lipoprotein biosynthesis (diacylglyceryl transfer). In terms of biological role, catalyzes the transfer of the diacylglyceryl group from phosphatidylglycerol to the sulfhydryl group of the N-terminal cysteine of a prolipoprotein, the first step in the formation of mature lipoproteins. This Protochlamydia amoebophila (strain UWE25) protein is Phosphatidylglycerol--prolipoprotein diacylglyceryl transferase.